Here is a 490-residue protein sequence, read N- to C-terminus: Probable glycine dehydrogenase (decarboxylating) subunit 2 (490 aa).

N6-(pyridoxal phosphate)lysine is present on lysine 273.

This sequence belongs to the GcvP family. C-terminal subunit subfamily. In terms of assembly, the glycine cleavage system is composed of four proteins: P, T, L and H. In this organism, the P 'protein' is a heterodimer of two subunits. The cofactor is pyridoxal 5'-phosphate.

It carries out the reaction N(6)-[(R)-lipoyl]-L-lysyl-[glycine-cleavage complex H protein] + glycine + H(+) = N(6)-[(R)-S(8)-aminomethyldihydrolipoyl]-L-lysyl-[glycine-cleavage complex H protein] + CO2. In terms of biological role, the glycine cleavage system catalyzes the degradation of glycine. The P protein binds the alpha-amino group of glycine through its pyridoxal phosphate cofactor; CO(2) is released and the remaining methylamine moiety is then transferred to the lipoamide cofactor of the H protein. The sequence is that of Probable glycine dehydrogenase (decarboxylating) subunit 2 from Staphylococcus aureus (strain Mu50 / ATCC 700699).